Consider the following 1433-residue polypeptide: DNA-directed RNA polymerase subunit beta' (1433 aa).

Zn(2+) contacts are provided by C66, C68, C81, and C84. Residues 328–347 (RKSSAVKTDSNRPLKSLSDS) form a disordered region. Over residues 329–346 (KSSAVKTDSNRPLKSLSD) the composition is skewed to polar residues. The Mg(2+) site is built by D477, D479, and D481. Residues C825, C899, C906, and C909 each contribute to the Zn(2+) site.

It belongs to the RNA polymerase beta' chain family. The RNAP catalytic core consists of 2 alpha, 1 beta, 1 beta' and 1 omega subunit. When a sigma factor is associated with the core the holoenzyme is formed, which can initiate transcription. The cofactor is Mg(2+). Zn(2+) is required as a cofactor.

It carries out the reaction RNA(n) + a ribonucleoside 5'-triphosphate = RNA(n+1) + diphosphate. In terms of biological role, DNA-dependent RNA polymerase catalyzes the transcription of DNA into RNA using the four ribonucleoside triphosphates as substrates. The chain is DNA-directed RNA polymerase subunit beta' from Christiangramia forsetii (strain DSM 17595 / CGMCC 1.15422 / KT0803) (Gramella forsetii).